The chain runs to 667 residues: Protein OS-9 (667 aa).

A signal peptide spans 1–25 (MAAETLLSSLLGLLLLGLLLPASLT). Positions 108-230 (APCLLKTKDW…TIRTPRLCPH (123 aa)) constitute an MRH domain. A disulfide bond links Cys110 and Cys123. The a mannooligosaccharide derivative site is built by Trp117, Trp118, and Gln130. Asn177 carries N-linked (GlcNAc...) asparagine glycosylation. 2 disulfides stabilise this stretch: Cys181–Cys216 and Cys196–Cys228. Residues Asp182, Arg188, Glu212, and Tyr218 each contribute to the a mannooligosaccharide derivative site. Disordered regions lie at residues 284–355 (WSET…NNVQ), 372–452 (LKGG…RDRL), 464–483 (LENI…LKKE), 504–540 (LEEK…PEHR), and 633–667 (AQKE…EFDF). Composition is skewed to basic and acidic residues over residues 302–311 (TKDDSKDSDF) and 396–412 (PQRE…RQRE). Residues 413–429 (MEEEEDEDEDEDEDEDE) show a composition bias toward acidic residues. Over residues 430 to 452 (RQLLGEFEKELEGILLPSDRDRL) the composition is skewed to basic and acidic residues. Residues 504–513 (LEEKQSPELV) show a composition bias toward basic and acidic residues. A compositionally biased stretch (basic residues) spans 514-523 (KKHKKKRVVP). The span at 633–647 (AQKERQRQKELESNY) shows a compositional bias: basic and acidic residues.

Belongs to the OS-9 family. As to quaternary structure, component of the HRD1 complex, which comprises at least SYNV1/HRD1, DERL1/2, FAM8A1, HERPUD1/HERP, OS9, SEL1L and UBE2J1. FAM8A1 is stabilized by interaction with SYNV1, which prevents its proteasomal degradation. OS9 and UBE2J1 recruitment to the complex may be mediated by SEL1L. Through this complex, may interact with ERLEC1 and HSPA5. Interacts (via C-terminus) with CPNE6 (via second C2 domain); this interaction occurs in a calcium-dependent manner in vitro. Interacts with CREB3. In terms of processing, intramolecular disulfide bonds. Post-translationally, isoform 1 and isoform 2 are N-glycosylated. In terms of tissue distribution, ubiquitously expressed. Found as well in all tumor cell lines analyzed, amplified in sarcomas. Highly expressed in osteosarcoma SJSA-1 and rhabdomyosarcoma Rh30 cell lines. Isoform 2 is the major isoform detected in all cell types examined.

The protein localises to the endoplasmic reticulum lumen. Its function is as follows. Lectin component of the HRD1 complex, which functions in endoplasmic reticulum (ER) quality control and ER-associated degradation (ERAD). Specifically recognizes and binds improperly folded glycoproteins as well as hyperglycosylated proteins, retain them in the ER, and transfers them to the ubiquitination machinery and promote their degradation. Possible targets include TRPV4 as well as hyperglycosylated HSP90B1. This chain is Protein OS-9 (OS9), found in Homo sapiens (Human).